The chain runs to 323 residues: tRNA U34 carboxymethyltransferase (323 aa).

Carboxy-S-adenosyl-L-methionine-binding positions include Lys91, Trp105, Lys110, Gly130, 152–154 (DPT), 181–182 (IE), Met196, Tyr200, and Arg315.

This sequence belongs to the class I-like SAM-binding methyltransferase superfamily. CmoB family. Homotetramer.

The enzyme catalyses carboxy-S-adenosyl-L-methionine + 5-hydroxyuridine(34) in tRNA = 5-carboxymethoxyuridine(34) in tRNA + S-adenosyl-L-homocysteine + H(+). Its function is as follows. Catalyzes carboxymethyl transfer from carboxy-S-adenosyl-L-methionine (Cx-SAM) to 5-hydroxyuridine (ho5U) to form 5-carboxymethoxyuridine (cmo5U) at position 34 in tRNAs. This is tRNA U34 carboxymethyltransferase from Escherichia fergusonii (strain ATCC 35469 / DSM 13698 / CCUG 18766 / IAM 14443 / JCM 21226 / LMG 7866 / NBRC 102419 / NCTC 12128 / CDC 0568-73).